The sequence spans 432 residues: Adenosylhomocysteinase (432 aa).

Serine 2 carries the post-translational modification N-acetylserine. Substrate is bound by residues threonine 57, aspartate 131, and glutamate 156. A Phosphoserine modification is found at serine 183. An NAD binding region spans residues 183–350 (SVTKSKFDNL…EGRLVNLGCA (168 aa)). The substrate site is built by lysine 186 and aspartate 190. Lysine 186 bears the N6-(2-hydroxyisobutyryl)lysine mark. Tyrosine 193 bears the Phosphotyrosine mark.

Belongs to the adenosylhomocysteinase family. As to quaternary structure, homotetramer. Interaction with AHCYL1. Requires NAD(+) as cofactor.

The protein resides in the cytoplasm. It localises to the melanosome. The protein localises to the nucleus. It is found in the endoplasmic reticulum. The enzyme catalyses S-adenosyl-L-homocysteine + H2O = L-homocysteine + adenosine. The protein operates within amino-acid biosynthesis; L-homocysteine biosynthesis; L-homocysteine from S-adenosyl-L-homocysteine: step 1/1. Functionally, catalyzes the hydrolysis of S-adenosyl-L-homocysteine to form adenosine and homocysteine. Binds copper ions. In Bos taurus (Bovine), this protein is Adenosylhomocysteinase (AHCY).